The primary structure comprises 365 residues: tRNA/tmRNA (uracil-C(5))-methyltransferase (365 aa).

S-adenosyl-L-methionine-binding residues include Gln189, Tyr217, Asn222, Glu238, and Asp298. Residue Cys323 is the Nucleophile of the active site. Glu357 (proton acceptor) is an active-site residue.

The protein belongs to the class I-like SAM-binding methyltransferase superfamily. RNA M5U methyltransferase family. TrmA subfamily.

The enzyme catalyses uridine(54) in tRNA + S-adenosyl-L-methionine = 5-methyluridine(54) in tRNA + S-adenosyl-L-homocysteine + H(+). It catalyses the reaction uridine(341) in tmRNA + S-adenosyl-L-methionine = 5-methyluridine(341) in tmRNA + S-adenosyl-L-homocysteine + H(+). Its function is as follows. Dual-specificity methyltransferase that catalyzes the formation of 5-methyluridine at position 54 (m5U54) in all tRNAs, and that of position 341 (m5U341) in tmRNA (transfer-mRNA). The polypeptide is tRNA/tmRNA (uracil-C(5))-methyltransferase (Proteus mirabilis (strain HI4320)).